The sequence spans 319 residues: Transcription factor jun-1 (319 aa).

2 disordered regions span residues 1–52 (MEED…EKES) and 216–264 (NGVN…CRQK). Residues 8 to 19 (PPSSSTSSESPE) are compositionally biased toward low complexity. Basic residues predominate over residues 28–38 (PTRRRKNSKKD). Positions 244–285 (KKKLERKRARNRQAATKCRQKKMDRIKELEEQVLHEKHRGQR) are basic motif. In terms of domain architecture, bZIP spans 244 to 307 (KKKLERKRAR…EHFRRTVEHH (64 aa)). Residues 286–293 (LDAELLEL) are leucine-zipper.

The protein belongs to the bZIP family. Jun subfamily. As to quaternary structure, heterodimer; with fos-1. Isoform a, isoform b, isoform c and isoform d are expressed in the spermatheca.

It is found in the nucleus. Its function is as follows. Transcription factor that recognizes and binds to the AP-1 non-canonical enhancer heptamer motif 5'-TTAGTCA-3'. Required for ovulation. Controls plc-1 expression in the spermatheca to regulate spermathecal valve dilation. This Caenorhabditis elegans protein is Transcription factor jun-1.